The sequence spans 366 residues: MANVTLRNVRKTYPGGVEAIKGIDFAVGDGQFCVLVGPSGCGKSTLLRMVAGLETITKGEIDIGGRVVNDIEPADRDIAMVFQNYALYPHMSVYNNMAYGLRNRGMPKPEIDSRVREAARILEIGALLERKPKQLSGGQRQRVAMGRAIVRQPKVFLFDEPLSNLDAKLRIAMRVEIRKLQRRLNTTSIYVTHDQLEAMTLADILVVMNGGVVEQIGNPLEIYRKPASTFVASFIGAPPMNLIALEPDEIRAQFAGDVRANTEAGILGIRPEDLLISTEAAASGGLALELVVDAIERVGAETFVYGARSRHGEPVISAKPGELPPGEVIVRVPGQSAPAAGERIMVTAPREKLHLFSADGRRRIDL.

In terms of domain architecture, ABC transporter spans 4 to 235; that stretch reads VTLRNVRKTY…PASTFVASFI (232 aa). 37-44 is an ATP binding site; sequence GPSGCGKS.

The protein belongs to the ABC transporter superfamily. sn-glycerol-3-phosphate importer (TC 3.A.1.1.3) family. The complex is composed of two ATP-binding proteins (UgpC), two transmembrane proteins (UgpA and UgpE) and a solute-binding protein (UgpB).

Its subcellular location is the cell inner membrane. The enzyme catalyses sn-glycerol 3-phosphate(out) + ATP + H2O = sn-glycerol 3-phosphate(in) + ADP + phosphate + H(+). Functionally, part of the ABC transporter complex UgpBAEC involved in sn-glycerol-3-phosphate (G3P) import. Responsible for energy coupling to the transport system. The polypeptide is sn-glycerol-3-phosphate import ATP-binding protein UgpC (Rhodopseudomonas palustris (strain BisB18)).